The primary structure comprises 158 residues: NAD(P)H-quinone oxidoreductase subunit J, chloroplastic (158 aa).

Belongs to the complex I 30 kDa subunit family. NDH is composed of at least 16 different subunits, 5 of which are encoded in the nucleus.

The protein resides in the plastid. It localises to the chloroplast thylakoid membrane. It carries out the reaction a plastoquinone + NADH + (n+1) H(+)(in) = a plastoquinol + NAD(+) + n H(+)(out). The catalysed reaction is a plastoquinone + NADPH + (n+1) H(+)(in) = a plastoquinol + NADP(+) + n H(+)(out). Functionally, NDH shuttles electrons from NAD(P)H:plastoquinone, via FMN and iron-sulfur (Fe-S) centers, to quinones in the photosynthetic chain and possibly in a chloroplast respiratory chain. The immediate electron acceptor for the enzyme in this species is believed to be plastoquinone. Couples the redox reaction to proton translocation, and thus conserves the redox energy in a proton gradient. The sequence is that of NAD(P)H-quinone oxidoreductase subunit J, chloroplastic from Citrus sinensis (Sweet orange).